The chain runs to 238 residues: MANRFRSGISFFKTIAVTDSVSSVRSKSLFPALRTYATASAQTTANVKVPIALVGENGNFASWLYIAAVKMNSLEKIETDLSEMIEAMKTAPIFAQFTKDPSVPRGTRLAAIRDACDQAKFAEPTKNFLSLLAENGKLKNLDAIVKKFMQLTNAHRGDVKVLVTTVIPLPPAEEKELTETLQEIIGAGKKITVEQKIDPSIYGGLIVEFQQKVLDMSIRTRAQQMERLLREPVDFNNL.

The transit peptide at 1–36 (MANRFRSGISFFKTIAVTDSVSSVRSKSLFPALRTY) directs the protein to the mitochondrion. Threonine 90 is subject to Phosphothreonine.

The protein belongs to the ATPase delta chain family. F-type ATPases have 2 components, CF(1) - the catalytic core - and CF(0) - the membrane proton channel. CF(1) has five subunits: alpha(3), beta(3), gamma(1), delta(1), epsilon(1). CF(0) has three main subunits: a, b and c.

The protein localises to the mitochondrion. The protein resides in the mitochondrion inner membrane. Its function is as follows. Mitochondrial membrane ATP synthase (F(1)F(0) ATP synthase or Complex V) produces ATP from ADP in the presence of a proton gradient across the membrane which is generated by electron transport complexes of the respiratory chain. F-type ATPases consist of two structural domains, F(1) - containing the extramembraneous catalytic core and F(0) - containing the membrane proton channel, linked together by a central stalk and a peripheral stalk. During catalysis, ATP synthesis in the catalytic domain of F(1) is coupled via a rotary mechanism of the central stalk subunits to proton translocation. Part of the complex F(0) domain and the peripheric stalk, which acts as a stator to hold the catalytic alpha(3)beta(3) subcomplex and subunit a/ATP6 static relative to the rotary elements. The chain is ATP synthase subunit O, mitochondrial from Arabidopsis thaliana (Mouse-ear cress).